Consider the following 52-residue polypeptide: Large ribosomal subunit protein bL32c (52 aa).

The protein belongs to the bacterial ribosomal protein bL32 family.

The protein localises to the plastid. It is found in the chloroplast. In Eucalyptus globulus subsp. globulus (Tasmanian blue gum), this protein is Large ribosomal subunit protein bL32c.